We begin with the raw amino-acid sequence, 388 residues long: Probable ubiquitin-conjugating enzyme E2 L709 (388 aa).

Residues 3 to 162 (NVHKRVIKDI…GNDLMVQKLF (160 aa)) enclose the UBC core domain. Cysteine 95 acts as the Glycyl thioester intermediate in catalysis. A disordered region spans residues 195-388 (VEEKSAKTSK…SSKSSKTGKK (194 aa)). Composition is skewed to acidic residues over residues 221 to 238 (SEEE…DSES) and 246 to 297 (DVVD…ESEE). Low complexity predominate over residues 310 to 388 (KTTTKSSSTK…SSKSSKTGKK (79 aa)).

This sequence belongs to the ubiquitin-conjugating enzyme family.

The catalysed reaction is S-ubiquitinyl-[E1 ubiquitin-activating enzyme]-L-cysteine + [E2 ubiquitin-conjugating enzyme]-L-cysteine = [E1 ubiquitin-activating enzyme]-L-cysteine + S-ubiquitinyl-[E2 ubiquitin-conjugating enzyme]-L-cysteine.. It functions in the pathway protein modification; protein ubiquitination. In terms of biological role, catalyzes the covalent attachment of ubiquitin to other proteins. This chain is Probable ubiquitin-conjugating enzyme E2 L709, found in Acanthamoeba polyphaga (Amoeba).